Here is a 445-residue protein sequence, read N- to C-terminus: Ribosomal protein uS12 methylthiotransferase RimO (445 aa).

The 116-residue stretch at 4 to 119 folds into the MTTase N-terminal domain; it reads IKVALVSLGC…LLESIKVFLK (116 aa). [4Fe-4S] cluster is bound by residues C13, C48, C82, C156, C160, and C163. The Radical SAM core domain occupies 142–372; it reads TTPTYTAYVR…MILQQSISKD (231 aa). Residues 375-441 form the TRAM domain; sequence KEKIGKIYEV…EYDLIGVVYN (67 aa).

It belongs to the methylthiotransferase family. RimO subfamily. Requires [4Fe-4S] cluster as cofactor.

Its subcellular location is the cytoplasm. It catalyses the reaction L-aspartate(89)-[ribosomal protein uS12]-hydrogen + (sulfur carrier)-SH + AH2 + 2 S-adenosyl-L-methionine = 3-methylsulfanyl-L-aspartate(89)-[ribosomal protein uS12]-hydrogen + (sulfur carrier)-H + 5'-deoxyadenosine + L-methionine + A + S-adenosyl-L-homocysteine + 2 H(+). Catalyzes the methylthiolation of an aspartic acid residue of ribosomal protein uS12. This is Ribosomal protein uS12 methylthiotransferase RimO from Clostridium botulinum (strain Okra / Type B1).